A 516-amino-acid polypeptide reads, in one-letter code: D-aminopeptidase (516 aa).

Catalysis depends on serine 61, which acts as the Nucleophile. The active-site Proton donor/acceptor is lysine 64. Residues 476–486 (RRSMDAPAPGD) form an important for specificity region. Aspartate 480 contacts substrate.

It belongs to the peptidase S12 family. In terms of assembly, homodimer.

It carries out the reaction Release of an N-terminal D-amino acid from a peptide, Xaa-|-Yaa-, in which Xaa is preferably D-Ala, D-Ser or D-Thr. D-amino acid amides and methyl esters also are hydrolyzed, as is glycine amide.. With respect to regulation, inhibited by beta-lactam compounds such as 6-aminopenicillic acid, 7-aminocephalosporanic acid, benzylpenicillin and ampicillin. Inhibited by p-chloromercuribenzoate. In terms of biological role, hydrolyzes N-terminal residues in D-amino acid-containing peptides. In Cereibacter sphaeroides (strain ATCC 17029 / ATH 2.4.9) (Rhodobacter sphaeroides), this protein is D-aminopeptidase.